The chain runs to 580 residues: Glutamine--tRNA ligase (580 aa).

Positions 41 to 51 (PEPNGYLHIGH) match the 'HIGH' region motif. ATP is bound by residues 42–44 (EPN) and 48–54 (HIGHAKA). 2 residues coordinate L-glutamine: Asp-74 and Tyr-218. ATP-binding positions include Thr-237, 285 to 286 (RL), and 293 to 295 (MSK). The short motif at 292–296 (VMSKR) is the 'KMSKS' region element.

This sequence belongs to the class-I aminoacyl-tRNA synthetase family. In terms of assembly, monomer.

It localises to the cytoplasm. It catalyses the reaction tRNA(Gln) + L-glutamine + ATP = L-glutaminyl-tRNA(Gln) + AMP + diphosphate. The protein is Glutamine--tRNA ligase of Xylella fastidiosa (strain Temecula1 / ATCC 700964).